The chain runs to 195 residues: Granulocyte colony-stimulating factor (195 aa).

Residues 1–21 (MKLMVLQLLLWHSALWTVHEA) form the signal peptide. Disulfide bonds link cysteine 57-cysteine 63 and cysteine 85-cysteine 95. Residue threonine 154 is glycosylated (O-linked (GalNAc...) threonine).

Belongs to the IL-6 superfamily. In terms of assembly, monomer. Post-translationally, O-glycosylated.

Its subcellular location is the secreted. Its function is as follows. Granulocyte/macrophage colony-stimulating factors are cytokines that act in hematopoiesis by controlling the production, differentiation, and function of 2 related white cell populations of the blood, the granulocytes and the monocytes-macrophages. This CSF induces granulocytes. In Bos taurus (Bovine), this protein is Granulocyte colony-stimulating factor (CSF3).